Reading from the N-terminus, the 1833-residue chain is Protein TIC 214 (1833 aa).

6 consecutive transmembrane segments (helical) span residues 18 to 38 (IINSVVVVGLYYGFLTTFSIG), 67 to 87 (FIMGQLMMFISIYYTPLHLAL), 90 to 110 (PHTITVLALPYLLFHFFWNNH), 127 to 147 (LSIQCVFLNNLIFQLFNYFIL), 175 to 195 (VGWLIGHILFMKWVGLVLVWI), and 218 to 238 (IFSILFFITCVYYLGRMPSPI). Residues 254-301 (EETNLEIEKTSETKETKQEEEGFTEEDPSPSLFSEEKEDPDKIDETEK) are disordered. 2 stretches are compositionally biased toward basic and acidic residues: residues 259 to 273 (EIEKTSETKETKQEE) and 292 to 301 (DPDKIDETEK).

It belongs to the TIC214 family. As to quaternary structure, part of the Tic complex.

The protein localises to the plastid. It is found in the chloroplast inner membrane. In terms of biological role, involved in protein precursor import into chloroplasts. May be part of an intermediate translocation complex acting as a protein-conducting channel at the inner envelope. This is Protein TIC 214 from Spinacia oleracea (Spinach).